The chain runs to 368 residues: DNA replication and repair protein RecF (368 aa).

30 to 37 contacts ATP; it reads GDNGAGKT.

This sequence belongs to the RecF family.

It is found in the cytoplasm. In terms of biological role, the RecF protein is involved in DNA metabolism; it is required for DNA replication and normal SOS inducibility. RecF binds preferentially to single-stranded, linear DNA. It also seems to bind ATP. This Xanthomonas oryzae pv. oryzae (strain KACC10331 / KXO85) protein is DNA replication and repair protein RecF.